Consider the following 429-residue polypeptide: MQHHHQGSYGGGGGGGGYPGQAYREQNPYGYGQQSPQQGYGAPQQHNGYNQPPSGYGQPQHNGGQMYGQRQQGMWLRVRIASRDRKFLTFALGQYQNHYSHPHQGGPPPPPSEPVAFGHGAPQGYNFQYSRCTGKRKALMIGINYFGQKGQLRGCINDVKNMSTYLNQNFGYAREDMVLLTDDQQNPMSQPTKANILRAMHWLVKDAQPNDSLFFHYSGHGGQTPDLDGDEEDGYDEVIYPVDFRQAGHIVDDEMHRIMVQPLRPGVRLTAIFDSCHSGSALDLPYIYSTQGILKEPNLAKEAGQGLLGVVSAYARGDMGSMVSTAVGFLKRAAKGDEAYERTKQTKTSPADVIMWSGSKDSQTSQDAQIAGQATGAMSWAFISALRKNPQQSYVQLLNSIRDELATKYTQKPQLSCSHPLDTNLLYVM.

The tract at residues 1 to 68 (MQHHHQGSYG…PQHNGGQMYG (68 aa)) is disordered. The segment covering 8 to 19 (SYGGGGGGGGYP) has biased composition (gly residues). A compositionally biased stretch (low complexity) spans 20 to 45 (GQAYREQNPYGYGQQSPQQGYGAPQQ). A compositionally biased stretch (polar residues) spans 46 to 62 (HNGYNQPPSGYGQPQHN). Catalysis depends on residues H220 and C276.

The protein belongs to the peptidase C14B family.

Its function is as follows. Involved in cell death (apoptosis). In Aspergillus clavatus (strain ATCC 1007 / CBS 513.65 / DSM 816 / NCTC 3887 / NRRL 1 / QM 1276 / 107), this protein is Metacaspase-1A (casA).